Here is a 336-residue protein sequence, read N- to C-terminus: Holliday junction branch migration complex subunit RuvB (336 aa).

The large ATPase domain (RuvB-L) stretch occupies residues 1 to 182; sequence MKERIVNLET…FGMSFRMQFY (182 aa). ATP contacts are provided by residues Leu21, Arg22, Gly63, Lys66, Thr67, Ser68, 129-131, Arg172, Tyr182, and Arg219; that span reads EDF. Thr67 provides a ligand contact to Mg(2+). Residues 183–253 are small ATPAse domain (RuvB-S); it reads SPSELALIIK…ITLHALNELG (71 aa). Residues 256-336 are head domain (RuvB-H); the sequence is ELGFDEADLA…IPTLKSQTLF (81 aa). DNA is bound by residues Arg310 and Arg315.

Belongs to the RuvB family. As to quaternary structure, homohexamer. Forms an RuvA(8)-RuvB(12)-Holliday junction (HJ) complex. HJ DNA is sandwiched between 2 RuvA tetramers; dsDNA enters through RuvA and exits via RuvB. An RuvB hexamer assembles on each DNA strand where it exits the tetramer. Each RuvB hexamer is contacted by two RuvA subunits (via domain III) on 2 adjacent RuvB subunits; this complex drives branch migration. In the full resolvosome a probable DNA-RuvA(4)-RuvB(12)-RuvC(2) complex forms which resolves the HJ.

The protein resides in the cytoplasm. It catalyses the reaction ATP + H2O = ADP + phosphate + H(+). The RuvA-RuvB-RuvC complex processes Holliday junction (HJ) DNA during genetic recombination and DNA repair, while the RuvA-RuvB complex plays an important role in the rescue of blocked DNA replication forks via replication fork reversal (RFR). RuvA specifically binds to HJ cruciform DNA, conferring on it an open structure. The RuvB hexamer acts as an ATP-dependent pump, pulling dsDNA into and through the RuvAB complex. RuvB forms 2 homohexamers on either side of HJ DNA bound by 1 or 2 RuvA tetramers; 4 subunits per hexamer contact DNA at a time. Coordinated motions by a converter formed by DNA-disengaged RuvB subunits stimulates ATP hydrolysis and nucleotide exchange. Immobilization of the converter enables RuvB to convert the ATP-contained energy into a lever motion, pulling 2 nucleotides of DNA out of the RuvA tetramer per ATP hydrolyzed, thus driving DNA branch migration. The RuvB motors rotate together with the DNA substrate, which together with the progressing nucleotide cycle form the mechanistic basis for DNA recombination by continuous HJ branch migration. Branch migration allows RuvC to scan DNA until it finds its consensus sequence, where it cleaves and resolves cruciform DNA. This chain is Holliday junction branch migration complex subunit RuvB, found in Helicobacter pylori (strain HPAG1).